Here is a 744-residue protein sequence, read N- to C-terminus: Glucosamine inositolphosphorylceramide transferase 1 (744 aa).

Transmembrane regions (helical) follow at residues 31 to 51, 378 to 398, and 460 to 480; these read FLVA…WLVV, SLFG…VGFV, and LFFC…VHFL. Substrate is bound by residues Asn-534, 558–563, 579–581, Arg-609, and 665–669; these read NSLNNR, DDD, and FNCED. Asp-581 is a Mn(2+) binding site. An intrachain disulfide couples Cys-667 to Cys-718. Residue Asp-669 is part of the active site.

It belongs to the glycosyltransferase 64 family. Mn(2+) serves as cofactor.

It is found in the membrane. The protein operates within sphingolipid metabolism. Its function is as follows. Essential protein. Glycosyltransferase that mediates the glycosylation of glycosylinositol phosphorylceramides (GIPCs), the major sphingolipids in the plasma membrane; acts as a HexN(Ac)-specific GIPC sugar transferase. Responsible for the glycosylation of a subgroup of GIPCs found in seeds and pollen that contain GlcNAc and GlcN (GlcN(Ac)). Maybe involved in the maintenance of cell-cell adhesion. This chain is Glucosamine inositolphosphorylceramide transferase 1, found in Oryza sativa subsp. indica (Rice).